We begin with the raw amino-acid sequence, 191 residues long: dCTP deaminase, dUMP-forming (191 aa).

DCTP contacts are provided by residues 101–106 (KSSLGR), Asp119, 127–129 (TLE), Gln148, Tyr162, and Gln174. Glu129 functions as the Proton donor/acceptor in the catalytic mechanism. The interval 169 to 191 (SRYQGQRGPTASRSFQNFHRTQV) is disordered. Over residues 171-191 (YQGQRGPTASRSFQNFHRTQV) the composition is skewed to polar residues.

Belongs to the dCTP deaminase family. Homotrimer.

The catalysed reaction is dCTP + 2 H2O = dUMP + NH4(+) + diphosphate. Its pathway is pyrimidine metabolism; dUMP biosynthesis; dUMP from dCTP: step 1/1. Its function is as follows. Bifunctional enzyme that catalyzes both the deamination of dCTP to dUTP and the hydrolysis of dUTP to dUMP without releasing the toxic dUTP intermediate. The sequence is that of dCTP deaminase, dUMP-forming from Streptomyces griseus subsp. griseus (strain JCM 4626 / CBS 651.72 / NBRC 13350 / KCC S-0626 / ISP 5235).